The sequence spans 263 residues: Hydroxyacylglutathione hydrolase (263 aa).

His-55, His-57, Asp-59, His-60, His-117, Asp-134, and His-172 together coordinate Zn(2+).

The protein belongs to the metallo-beta-lactamase superfamily. Glyoxalase II family. As to quaternary structure, monomer. Zn(2+) is required as a cofactor.

The enzyme catalyses an S-(2-hydroxyacyl)glutathione + H2O = a 2-hydroxy carboxylate + glutathione + H(+). Its pathway is secondary metabolite metabolism; methylglyoxal degradation; (R)-lactate from methylglyoxal: step 2/2. Its function is as follows. Thiolesterase that catalyzes the hydrolysis of S-D-lactoyl-glutathione to form glutathione and D-lactic acid. The protein is Hydroxyacylglutathione hydrolase of Shewanella baltica (strain OS223).